The following is a 258-amino-acid chain: Acetylglutamate kinase (258 aa).

Substrate-binding positions include 41–42, arginine 63, and asparagine 156; that span reads GG.

This sequence belongs to the acetylglutamate kinase family. ArgB subfamily.

It is found in the cytoplasm. The enzyme catalyses N-acetyl-L-glutamate + ATP = N-acetyl-L-glutamyl 5-phosphate + ADP. It participates in amino-acid biosynthesis; L-arginine biosynthesis; N(2)-acetyl-L-ornithine from L-glutamate: step 2/4. Functionally, catalyzes the ATP-dependent phosphorylation of N-acetyl-L-glutamate. This is Acetylglutamate kinase from Geobacillus kaustophilus (strain HTA426).